The primary structure comprises 133 residues: Ubiquitin-like FUBI-ribosomal protein eS30 fusion protein (133 aa).

The Ubiquitin-like domain occupies 1-74; that stretch reads MQLFVRAQEL…LEVAGRMLGG (74 aa). The disordered stretch occupies residues 84–110; sequence GKVRGQTPKVAKQEKKKKKTGRAKRRM. Basic residues predominate over residues 97 to 110; that stretch reads EKKKKKTGRAKRRM. The residue at position 125 (Lys-125) is an N6-succinyllysine.

This sequence in the N-terminal section; belongs to the ubiquitin family. It in the C-terminal section; belongs to the eukaryotic ribosomal protein eS30 family. In terms of assembly, component of the 40S subunit of the ribosome. In terms of processing, FUBI is cleaved from ribosomal protein S30 by the deubiquitinase USP36 before the assembly of ribosomal protein S30 into pre-40S ribosomal particles. FUBI removal from ribosomal protein S30 is a crucial event for the final maturation of pre-40S particles.

Its subcellular location is the cytoplasm. It is found in the nucleus. May have pro-apoptotic activity. Functionally, component of the 40S subunit of the ribosome. Contributes to the assembly and function of 40S ribosomal subunits. The protein is Ubiquitin-like FUBI-ribosomal protein eS30 fusion protein of Homo sapiens (Human).